A 715-amino-acid polypeptide reads, in one-letter code: Interferon-induced GTP-binding protein Mx2 (715 aa).

Residues 115 to 387 form the Dynamin-type G domain; sequence DLALPAIAVI…LIMHIQKSLP (273 aa). The segment at 125-132 is G1 motif; sequence GDQSSGKS. Position 125-132 (125-132) interacts with GTP; the sequence is GDQSSGKS. The interval 150 to 152 is G2 motif; the sequence is VTR. Residues 225–228 are G3 motif; it reads DLPG. GTP contacts are provided by residues 225–229 and 294–297; these read DLPGI and TKPD. Residues 294-297 are G4 motif; that stretch reads TKPD. The G5 motif stretch occupies residues 326 to 329; the sequence is KCRG. Residues 623 to 714 enclose the GED domain; sequence FTEIGIHLNA…ALCQFSSKEI (92 aa).

This sequence belongs to the TRAFAC class dynamin-like GTPase superfamily. Dynamin/Fzo/YdjA family.

Its subcellular location is the cytoplasm. It localises to the nucleus. The protein localises to the nuclear pore complex. Interferon-induced dynamin-like GTPase with potent antiviral activity against human immunodeficiency virus type 1 (HIV-1). Acts by targeting the viral capsid and affects the nuclear uptake and/or stability of the HIV-1 replication complex and the subsequent chromosomal integration of the proviral DNA. Exhibits antiviral activity also against simian immunodeficiency virus (SIV-mnd). May play a role in regulating nucleocytoplasmic transport and cell-cycle progression. This Homo sapiens (Human) protein is Interferon-induced GTP-binding protein Mx2 (MX2).